Consider the following 172-residue polypeptide: 3-hydroxydecanoyl-[acyl-carrier-protein] dehydratase (172 aa).

Histidine 71 is an active-site residue.

The protein belongs to the thioester dehydratase family. FabA subfamily. Homodimer.

The protein resides in the cytoplasm. The catalysed reaction is a (3R)-hydroxyacyl-[ACP] = a (2E)-enoyl-[ACP] + H2O. The enzyme catalyses (3R)-hydroxydecanoyl-[ACP] = (2E)-decenoyl-[ACP] + H2O. It catalyses the reaction (2E)-decenoyl-[ACP] = (3Z)-decenoyl-[ACP]. The protein operates within lipid metabolism; fatty acid biosynthesis. Necessary for the introduction of cis unsaturation into fatty acids. Catalyzes the dehydration of (3R)-3-hydroxydecanoyl-ACP to E-(2)-decenoyl-ACP and then its isomerization to Z-(3)-decenoyl-ACP. Can catalyze the dehydratase reaction for beta-hydroxyacyl-ACPs with saturated chain lengths up to 16:0, being most active on intermediate chain length. The sequence is that of 3-hydroxydecanoyl-[acyl-carrier-protein] dehydratase from Pectobacterium carotovorum subsp. carotovorum (strain PC1).